Here is a 205-residue protein sequence, read N- to C-terminus: Thymidine kinase (205 aa).

ATP-binding positions include 9–16 (SAMNAGKT) and 88–91 (DECH). The active-site Proton acceptor is the E89. Positions 146, 148, 183, and 186 each coordinate Zn(2+).

The protein belongs to the thymidine kinase family. As to quaternary structure, homotetramer.

It is found in the cytoplasm. It catalyses the reaction thymidine + ATP = dTMP + ADP + H(+). This Blochmanniella pennsylvanica (strain BPEN) protein is Thymidine kinase.